A 427-amino-acid chain; its full sequence is MNSLEYLIANPHILSDTTLTDALAALASSTNVENQDEEFDMEVNSDDEMKIDLSALINPSVFNALQLPIGTGRFPNPSPPRSSSGTNTPIRKTPGSRPDRGKFTILDNAEVAGPEEVLNVNFDSEILQRIFSDPKLGIQFLARYGLIPNTRVCRVQDCPKDQLMSLIKHANGFVWRCRSCRKRREKRIITKISVYEGTFLFYSRMPLNKFFIFMLNWCENPGLSITEYNRLMGENRLVEETIYNTIGFMRDIIQNWCDTIISSHVPIGGPHRVVEVVETLSTEQLSNKTRNRRTRHYTTRTVFISLADDKIKSVDFPLHNVNDLERALLECVQPGSIIVMRDSFMERFGQQEEISNALFNHYKVKSICDVWPDFNERERNKQYIKTEMNQVPNVNQEPYAYEYFFRRCFADKCFNHLLRVIRLLYQK.

The disordered stretch occupies residues 68–102 (PIGTGRFPNPSPPRSSSGTNTPIRKTPGSRPDRGK).

The protein resides in the nucleus. In terms of biological role, putative transcription factor. Acts in a TGF-beta-like pathway during development of male-specific genital sensilla (simple sense organs), known as rays. Involved in production of reactive oxygen species (ROS), acting downstream of the TGF-beta-like dbl-1 signaling pathway. Involved in locomotory behavior. This chain is Male abnormal protein mab-31, found in Caenorhabditis elegans.